A 315-amino-acid chain; its full sequence is Homoserine O-succinyltransferase (315 aa).

Catalysis depends on cysteine 142, which acts as the Acyl-thioester intermediate. Residues lysine 163 and serine 192 each coordinate substrate. Residue histidine 235 is the Proton acceptor of the active site. Glutamate 237 is a catalytic residue. A substrate-binding site is contributed by arginine 249.

The protein belongs to the MetA family.

Its subcellular location is the cytoplasm. It carries out the reaction L-homoserine + succinyl-CoA = O-succinyl-L-homoserine + CoA. The protein operates within amino-acid biosynthesis; L-methionine biosynthesis via de novo pathway; O-succinyl-L-homoserine from L-homoserine: step 1/1. In terms of biological role, transfers a succinyl group from succinyl-CoA to L-homoserine, forming succinyl-L-homoserine. This chain is Homoserine O-succinyltransferase, found in Shewanella piezotolerans (strain WP3 / JCM 13877).